Reading from the N-terminus, the 206-residue chain is Small ribosomal subunit protein uS4 (206 aa).

The 61-residue stretch at 96 to 156 (GRLDNVVYRM…EKAKKQSRVK (61 aa)) folds into the S4 RNA-binding domain.

Belongs to the universal ribosomal protein uS4 family. In terms of assembly, part of the 30S ribosomal subunit. Contacts protein S5. The interaction surface between S4 and S5 is involved in control of translational fidelity.

One of the primary rRNA binding proteins, it binds directly to 16S rRNA where it nucleates assembly of the body of the 30S subunit. In terms of biological role, with S5 and S12 plays an important role in translational accuracy. This is Small ribosomal subunit protein uS4 from Erwinia tasmaniensis (strain DSM 17950 / CFBP 7177 / CIP 109463 / NCPPB 4357 / Et1/99).